We begin with the raw amino-acid sequence, 157 residues long: Cyclic pyranopterin monophosphate synthase (157 aa).

Residues 74–76 (MCH) and 112–113 (ME) each bind substrate. Aspartate 127 is a catalytic residue.

The protein belongs to the MoaC family. In terms of assembly, homohexamer; trimer of dimers.

It catalyses the reaction (8S)-3',8-cyclo-7,8-dihydroguanosine 5'-triphosphate = cyclic pyranopterin phosphate + diphosphate. Its pathway is cofactor biosynthesis; molybdopterin biosynthesis. Functionally, catalyzes the conversion of (8S)-3',8-cyclo-7,8-dihydroguanosine 5'-triphosphate to cyclic pyranopterin monophosphate (cPMP). In Campylobacter jejuni subsp. doylei (strain ATCC BAA-1458 / RM4099 / 269.97), this protein is Cyclic pyranopterin monophosphate synthase.